A 174-amino-acid polypeptide reads, in one-letter code: Dual-action ribosomal maturation protein DarP (174 aa).

Belongs to the DarP family.

It is found in the cytoplasm. Member of a network of 50S ribosomal subunit biogenesis factors which assembles along the 30S-50S interface, preventing incorrect 23S rRNA structures from forming. Promotes peptidyl transferase center (PTC) maturation. This is Dual-action ribosomal maturation protein DarP from Pseudomonas paraeruginosa (strain DSM 24068 / PA7) (Pseudomonas aeruginosa (strain PA7)).